A 465-amino-acid polypeptide reads, in one-letter code: Sodium-dependent phosphate transport protein 1 (465 aa).

Asparagine 47 and asparagine 56 each carry an N-linked (GlcNAc...) asparagine glycan. A run of 10 helical transmembrane segments spans residues 79–99 (GIIFSSIFYGAFLIQIPVGYI), 109–129 (IGFALFLSSLVSIFIPQAAAV), 171–191 (MSLSGFLLGPFIVLLVTGIIC), 198–218 (MVFYIFGACGCAVCLLWFVLY), 255–275 (AMIKSLPLWAISFCCFAYLWT), 304–324 (LPYLFAWICGVIAGHTADFLM), 337–357 (LFTAIGLLLPIVFSMCLLYLS), 363–383 (TITFLILANASSSFCLGGALI), 399–419 (VTTLIGMTGGMTSSTVAGLFL), and 428–448 (FKIFLLMSIINVISVIFYLIF).

The protein belongs to the major facilitator superfamily. Sodium/anion cotransporter family. As to quaternary structure, interacts with PDZK1. In terms of tissue distribution, kidney cortex and liver.

It localises to the apical cell membrane. It carries out the reaction 3 Na(+)(out) + phosphate(out) = 3 Na(+)(in) + phosphate(in). The enzyme catalyses urate(out) = urate(in). Functionally, important for the resorption of phosphate by the kidney. May be involved in actively transporting phosphate into cells via Na(+) cotransport in the renal brush border membrane. Plays a role in urate transport in the kidney. In Oryctolagus cuniculus (Rabbit), this protein is Sodium-dependent phosphate transport protein 1 (SLC17A1).